Here is a 542-residue protein sequence, read N- to C-terminus: Protein NODULATION SIGNALING PATHWAY 1 (542 aa).

The tract at residues 73-150 (TSTTSLEPCG…SNCNSGNSKE (78 aa)) is disordered. Positions 92–103 (LPKKRNATDESS) are enriched in basic and acidic residues. The segment covering 136 to 148 (AKANGSNCNSGNS) has biased composition (low complexity). Positions 145–532 (SGNSKEGRWA…QPVSFCSLWK (388 aa)) constitute a GRAS domain. Residues 152–214 (RWAEQLLNPC…HLSSSSSSPT (63 aa)) form a leucine repeat I (LRI) region. The VHIID stretch occupies residues 233–332 (LLKFYEVSPW…GYNYYPRLLG (100 aa)). The short motif at 269 to 273 (LHILD) is the VHIID element. The leucine repeat II (LRII) stretch occupies residues 333-357 (YAQSININLQINRIENHSLQTLNAQ). Residues 367–452 (LIVCAQFRLH…RESDERRVME (86 aa)) form a PFYRE region. The tract at residues 455-532 (AAKALTNQRE…QPVSFCSLWK (78 aa)) is SAW.

Belongs to the GRAS family. Highly expressed in roots.

The protein localises to the nucleus. Functionally, transcriptional regulator essential for Nod-factor-induced gene expression. Acts downstream of calcium spiking and a calcium/calmodulin-dependent protein kinase required for activation of early nodulation gene expression. Acts as a common symbiosis gene that positively contributes to the early steps of the arbuscular mycorrhizal fungus and rhizobial infection processes in roots. Transcription factor involved in the positive regulation of the beta-carotene isomerase D27, which participates in a pathway leading to biosynthesis of strigolactones in roots. This chain is Protein NODULATION SIGNALING PATHWAY 1, found in Lotus japonicus (Lotus corniculatus var. japonicus).